The chain runs to 1296 residues: Aggregation substance (1296 aa).

The signal sequence occupies residues 1–43; that stretch reads MKQQTEVKKRFKMYKAKKHWVVAPILFIGVLGVVGLATDDVQA. 2 disordered regions span residues 48 to 188 and 1221 to 1245; these read TQPG…KPAE and HTPEKPQTPPEKTVIVPPTPKTPQA. The span at 89 to 99 shows a compositional bias: basic and acidic residues; it reads KVEEVASEKNG. 2 stretches are compositionally biased toward polar residues: residues 100-117 and 125-138; these read AEQSSATPNDTTNAQQPT and QEQPVVSPETTNEP. Residues 160–178 are compositionally biased toward basic and acidic residues; the sequence is KEFETPDVDKAVDEAKKDP. The LPXTG sorting signal motif lies at 1261–1265; the sequence is LPQTG. T1264 bears the Pentaglycyl murein peptidoglycan amidated threonine mark. A propeptide spans 1265-1296 (removed by sortase); the sequence is GEKQNVLLTVAGSLAAMLGLAGLGFKRRKETK.

It belongs to the antigen I/II family.

The protein resides in the secreted. It localises to the cell wall. Aggregation substance allows donor and recipient strains to form tight aggregates which allow the non-motile bacteria to maintain physical contact over a period of time sufficient to permit conjugative transfer of the sex pheromone plasmid from donor to recipient strains. The polypeptide is Aggregation substance (asa1) (Enterococcus faecalis (strain ATCC 700802 / V583)).